We begin with the raw amino-acid sequence, 66 residues long: Large ribosomal subunit protein bL31 (66 aa).

Residues C16, C18, C36, and C39 each coordinate Zn(2+).

It belongs to the bacterial ribosomal protein bL31 family. Type A subfamily. As to quaternary structure, part of the 50S ribosomal subunit. The cofactor is Zn(2+).

Binds the 23S rRNA. The sequence is that of Large ribosomal subunit protein bL31 from Natranaerobius thermophilus (strain ATCC BAA-1301 / DSM 18059 / JW/NM-WN-LF).